The chain runs to 88 residues: YcgL domain-containing protein HI_1446 (88 aa).

Residues 1–85 enclose the YcgL domain; sequence MLCAIYKSKK…QDDGLFNSLS (85 aa).

This chain is YcgL domain-containing protein HI_1446, found in Haemophilus influenzae (strain ATCC 51907 / DSM 11121 / KW20 / Rd).